The sequence spans 159 residues: 2-C-methyl-D-erythritol 2,4-cyclodiphosphate synthase (159 aa).

The a divalent metal cation site is built by Asp-8 and His-10. Residues Asp-8–His-10 and His-34–Ser-35 contribute to the 4-CDP-2-C-methyl-D-erythritol 2-phosphate site. Residue His-42 participates in a divalent metal cation binding. 4-CDP-2-C-methyl-D-erythritol 2-phosphate is bound by residues Asp-56–Gly-58, Phe-61–Asp-65, Phe-139, and Arg-142.

The protein belongs to the IspF family. Homotrimer. It depends on a divalent metal cation as a cofactor.

It carries out the reaction 4-CDP-2-C-methyl-D-erythritol 2-phosphate = 2-C-methyl-D-erythritol 2,4-cyclic diphosphate + CMP. The protein operates within isoprenoid biosynthesis; isopentenyl diphosphate biosynthesis via DXP pathway; isopentenyl diphosphate from 1-deoxy-D-xylulose 5-phosphate: step 4/6. Functionally, involved in the biosynthesis of isopentenyl diphosphate (IPP) and dimethylallyl diphosphate (DMAPP), two major building blocks of isoprenoid compounds. Catalyzes the conversion of 4-diphosphocytidyl-2-C-methyl-D-erythritol 2-phosphate (CDP-ME2P) to 2-C-methyl-D-erythritol 2,4-cyclodiphosphate (ME-CPP) with a corresponding release of cytidine 5-monophosphate (CMP). The sequence is that of 2-C-methyl-D-erythritol 2,4-cyclodiphosphate synthase from Syntrophus aciditrophicus (strain SB).